Here is a 704-residue protein sequence, read N- to C-terminus: Ion-translocating oxidoreductase complex subunit C (704 aa).

2 4Fe-4S ferredoxin-type domains span residues 368-397 and 407-436; these read MGAP…QQLY and KATA…VQYF. C377, C380, C383, C387, C416, C419, C422, and C426 together coordinate [4Fe-4S] cluster. The segment at 535-684 is disordered; sequence ARAKQAAHPM…PADPRKAAVA (150 aa). Low complexity predominate over residues 556-565; it reads KAAVEAAIAR.

The protein belongs to the 4Fe4S bacterial-type ferredoxin family. RnfC subfamily. The complex is composed of six subunits: RsxA, RsxB, RsxC, RsxD, RsxE and RsxG. [4Fe-4S] cluster serves as cofactor.

The protein localises to the cell inner membrane. In terms of biological role, part of a membrane-bound complex that couples electron transfer with translocation of ions across the membrane. Required to maintain the reduced state of SoxR. This chain is Ion-translocating oxidoreductase complex subunit C, found in Salmonella paratyphi C (strain RKS4594).